We begin with the raw amino-acid sequence, 166 residues long: Bacterial microcompartment shell protein EutK (166 aa).

The BMC domain maps to 4 to 88; the sequence is ALGLLEVDGM…PDDDTQWLVT (85 aa). The EutK-Ctail domain maps to 109–165; it reads ESADELLALLTSVRQGMTAGEVAAHFGWPLEKARNALEQLFSAGTLRKRSSRYRLKP.

This sequence belongs to the bacterial microcompartments protein family. In terms of assembly, monomeric in solution.

Its subcellular location is the bacterial microcompartment. It functions in the pathway amine and polyamine degradation; ethanolamine degradation. Probably a minor component of the bacterial microcompartment (BMC) shell dedicated to ethanolamine degradation. It might bind nucleic acids. The protein is Bacterial microcompartment shell protein EutK (eutK) of Escherichia coli (strain K12).